The following is a 220-amino-acid chain: A-type ATP synthase subunit K (220 aa).

Transmembrane regions (helical) follow at residues Leu-5 to Ile-25, Phe-63 to Ala-83, Leu-90 to Ala-110, Leu-125 to Phe-145, Ala-155 to Ile-175, and Leu-195 to Ile-215.

This sequence belongs to the V-ATPase proteolipid subunit family. As to quaternary structure, the A-type ATPase is composed of subunits A(3), B(3), C, D, E(1 or 2), F, H(2), I and K(x). Subunit K dimerizes and may form higher oligomers.

It is found in the cell membrane. Its function is as follows. Component of the A-type ATP synthase that produces ATP from ADP in the presence of a proton gradient across the membrane. This Methanocaldococcus jannaschii (strain ATCC 43067 / DSM 2661 / JAL-1 / JCM 10045 / NBRC 100440) (Methanococcus jannaschii) protein is A-type ATP synthase subunit K.